Reading from the N-terminus, the 72-residue chain is Translation initiation factor IF-1 (72 aa).

The region spanning 1-72 (MAKEKDTIRT…PTRGRIVYRK (72 aa)) is the S1-like domain.

Belongs to the IF-1 family. Component of the 30S ribosomal translation pre-initiation complex which assembles on the 30S ribosome in the order IF-2 and IF-3, IF-1 and N-formylmethionyl-tRNA(fMet); mRNA recruitment can occur at any time during PIC assembly.

Its subcellular location is the cytoplasm. In terms of biological role, one of the essential components for the initiation of protein synthesis. Stabilizes the binding of IF-2 and IF-3 on the 30S subunit to which N-formylmethionyl-tRNA(fMet) subsequently binds. Helps modulate mRNA selection, yielding the 30S pre-initiation complex (PIC). Upon addition of the 50S ribosomal subunit IF-1, IF-2 and IF-3 are released leaving the mature 70S translation initiation complex. The polypeptide is Translation initiation factor IF-1 (Thermus thermophilus (strain ATCC BAA-163 / DSM 7039 / HB27)).